Reading from the N-terminus, the 274-residue chain is GATA transcription factor 1 (274 aa).

Disordered stretches follow at residues methionine 1–leucine 39 and serine 102–alanine 132. The Nuclear localization signal signature appears at lysine 152 to arginine 159. The segment at leucine 190–alanine 244 adopts a GATA-type zinc-finger fold.

This sequence belongs to the type IV zinc-finger family. Class A subfamily. As to expression, mostly expressed in roots. Also expressed in stems, flowers and leaves.

It is found in the nucleus. In terms of biological role, transcriptional activator that specifically binds 5'-GATA-3' or 5'-GAT-3' motifs within gene promoters. May be involved in the regulation of some light-responsive genes. This chain is GATA transcription factor 1 (GATA1), found in Arabidopsis thaliana (Mouse-ear cress).